The sequence spans 334 residues: HTH-type transcriptional repressor PurR (334 aa).

The HTH lacI-type domain maps to 2–56 (ATIKDVARLAGVSTTTVSHVINKTRFVAETTQEKVMKAVDELNYAPSAVARSLKC). A DNA-binding region (H-T-H motif) is located at residues 4–23 (IKDVARLAGVSTTTVSHVIN). Residues 48-56 (SAVARSLKC) mediate DNA binding. Hypoxanthine contacts are provided by Phe73, Lys189, Phe220, and Asp274.

In terms of assembly, homodimer.

It participates in purine metabolism; purine nucleotide biosynthesis [regulation]. Is the main repressor of the genes involved in the de novo synthesis of purine nucleotides, regulating purB, purC, purEK, purF, purHD, purL, purMN and guaBA expression. PurR is allosterically activated to bind its cognate DNA by binding the purine corepressors, hypoxanthine or guanine, thereby effecting transcription repression. This Vibrio campbellii (strain ATCC BAA-1116) protein is HTH-type transcriptional repressor PurR.